A 259-amino-acid chain; its full sequence is tRNA pseudouridine synthase A (259 aa).

Asp-51 acts as the Nucleophile in catalysis. Tyr-109 contacts substrate.

It belongs to the tRNA pseudouridine synthase TruA family. In terms of assembly, homodimer.

It catalyses the reaction uridine(38/39/40) in tRNA = pseudouridine(38/39/40) in tRNA. In terms of biological role, formation of pseudouridine at positions 38, 39 and 40 in the anticodon stem and loop of transfer RNAs. In Colwellia psychrerythraea (strain 34H / ATCC BAA-681) (Vibrio psychroerythus), this protein is tRNA pseudouridine synthase A.